Reading from the N-terminus, the 457-residue chain is MPLSLPLHIVILAAGEGKRMKSALPKVLHPIAGKPMLAHVITTARALTPDAIHVVYGHAGNQVRAAFADQTDLHWVEQTQQLGTGHAVKQTMSAIPNAANVLVLYGDVPLIRAETLQRLPRASTPIAVLVTELANPAGYGHIVRNSEGKVAAIIEDKDADEEQRRIHTVNTGILCAESTALRRWLSKLSNTNMQGEYYLTDIFASATADLTPANMIMVTDAQEVEGVNDLWQLTQLERAWQIRAARALCLQGARVADPARLDQRGTIRIGQNVHIDIDVVLEGEIELGDNVVIGPFVRLKNVKLGPGTKVHAHCDLEGVTTTGSALIGPFARLRPETMLADGVHIGNFVETKNTSIGADSKANHLTYLGDAQIGTKVNIGAGTITCNYDGVNKSITLIGDGAFIGSHSALIAPVSVGAGATLGAGTVLTHDAPAHQLTVARARQTTLDGWQRPKKKT.

The tract at residues 1 to 230 (MPLSLPLHIV…AQEVEGVNDL (230 aa)) is pyrophosphorylase. UDP-N-acetyl-alpha-D-glucosamine contacts are provided by residues 12-15 (LAAG), K26, Q78, 83-84 (GT), 105-107 (YGD), G140, E155, N170, and N228. Mg(2+) is bound at residue D107. N228 is a Mg(2+) binding site. Positions 231-251 (WQLTQLERAWQIRAARALCLQ) are linker. Residues 252-457 (GARVADPARL…DGWQRPKKKT (206 aa)) form an N-acetyltransferase region. UDP-N-acetyl-alpha-D-glucosamine is bound by residues R334 and K352. The active-site Proton acceptor is the H364. Positions 367 and 378 each coordinate UDP-N-acetyl-alpha-D-glucosamine. Acetyl-CoA is bound by residues A381, 387–388 (NY), S406, A424, and R441.

This sequence in the N-terminal section; belongs to the N-acetylglucosamine-1-phosphate uridyltransferase family. In the C-terminal section; belongs to the transferase hexapeptide repeat family. In terms of assembly, homotrimer. It depends on Mg(2+) as a cofactor.

The protein resides in the cytoplasm. The catalysed reaction is alpha-D-glucosamine 1-phosphate + acetyl-CoA = N-acetyl-alpha-D-glucosamine 1-phosphate + CoA + H(+). It catalyses the reaction N-acetyl-alpha-D-glucosamine 1-phosphate + UTP + H(+) = UDP-N-acetyl-alpha-D-glucosamine + diphosphate. It functions in the pathway nucleotide-sugar biosynthesis; UDP-N-acetyl-alpha-D-glucosamine biosynthesis; N-acetyl-alpha-D-glucosamine 1-phosphate from alpha-D-glucosamine 6-phosphate (route II): step 2/2. It participates in nucleotide-sugar biosynthesis; UDP-N-acetyl-alpha-D-glucosamine biosynthesis; UDP-N-acetyl-alpha-D-glucosamine from N-acetyl-alpha-D-glucosamine 1-phosphate: step 1/1. Its pathway is bacterial outer membrane biogenesis; LPS lipid A biosynthesis. Catalyzes the last two sequential reactions in the de novo biosynthetic pathway for UDP-N-acetylglucosamine (UDP-GlcNAc). The C-terminal domain catalyzes the transfer of acetyl group from acetyl coenzyme A to glucosamine-1-phosphate (GlcN-1-P) to produce N-acetylglucosamine-1-phosphate (GlcNAc-1-P), which is converted into UDP-GlcNAc by the transfer of uridine 5-monophosphate (from uridine 5-triphosphate), a reaction catalyzed by the N-terminal domain. The chain is Bifunctional protein GlmU from Xylella fastidiosa (strain M23).